We begin with the raw amino-acid sequence, 56 residues long: Large ribosomal subunit protein bL32 (56 aa).

This sequence belongs to the bacterial ribosomal protein bL32 family.

This chain is Large ribosomal subunit protein bL32, found in Brevibacillus brevis (strain 47 / JCM 6285 / NBRC 100599).